The chain runs to 251 residues: Ubiquinone/menaquinone biosynthesis C-methyltransferase UbiE (251 aa).

S-adenosyl-L-methionine-binding positions include Thr-74, Asp-95, 123-124 (NA), and Ser-140.

This sequence belongs to the class I-like SAM-binding methyltransferase superfamily. MenG/UbiE family.

The enzyme catalyses a 2-demethylmenaquinol + S-adenosyl-L-methionine = a menaquinol + S-adenosyl-L-homocysteine + H(+). It catalyses the reaction a 2-methoxy-6-(all-trans-polyprenyl)benzene-1,4-diol + S-adenosyl-L-methionine = a 5-methoxy-2-methyl-3-(all-trans-polyprenyl)benzene-1,4-diol + S-adenosyl-L-homocysteine + H(+). It participates in quinol/quinone metabolism; menaquinone biosynthesis; menaquinol from 1,4-dihydroxy-2-naphthoate: step 2/2. It functions in the pathway cofactor biosynthesis; ubiquinone biosynthesis. Its function is as follows. Methyltransferase required for the conversion of demethylmenaquinol (DMKH2) to menaquinol (MKH2) and the conversion of 2-polyprenyl-6-methoxy-1,4-benzoquinol (DDMQH2) to 2-polyprenyl-3-methyl-6-methoxy-1,4-benzoquinol (DMQH2). This Citrobacter koseri (strain ATCC BAA-895 / CDC 4225-83 / SGSC4696) protein is Ubiquinone/menaquinone biosynthesis C-methyltransferase UbiE.